The chain runs to 310 residues: Transcriptional regulator NRG1 (310 aa).

Positions 85-131 (YYMGPPAQHRLPTPPPYPMSSPTTATAATPLSQQSPHLQPQQTLQQP) are disordered. A compositionally biased stretch (low complexity) spans 104 to 131 (SSPTTATAATPLSQQSPHLQPQQTLQQP). 2 consecutive C2H2-type zinc fingers follow at residues 228–250 (HVCKVCSRSFTTSGHLARHNRIH) and 256–280 (HQCPWPTCEARFARQDNCNQHYKTH).

Its subcellular location is the nucleus. Functionally, transcriptional repressor that binds NRG1 response elements (NRE) of target promoters. Involved in regulation of chlamydospore formation, hyphal growth, virulence, and stress response. Plays a key role in regulating true hyphal growth, but does not regulate pseudohyphal growth in the same fashion. Directs transcriptional repression of a subset of filament-specific genes such as HWP1, HYR1, ALS8, HWP1, or ECE1; via the TUP1 pathway. Functions with UME6 in a negative feedback loop to control the level and duration of filament-specific gene expression in response to inducing conditions. Plays a key role in biofilm formation and dispersion. Also plays the role of a negative regulator of virulence in mice models. Required for the expression of the cell wall genes RBR1. This chain is Transcriptional regulator NRG1 (NRG1), found in Candida albicans (strain SC5314 / ATCC MYA-2876) (Yeast).